Reading from the N-terminus, the 146-residue chain is Bifunctional adenosine 5'-phosphosulfate phosphorylase/adenylylsulfatase HINT4 (146 aa).

The HIT domain maps to Ile-9–Tyr-120. The Histidine triad motif signature appears at His-101–His-105. The active-site Tele-AMP-histidine intermediate is His-105.

Homodimer.

The protein resides in the peroxisome. The enzyme catalyses sulfate + ADP + H(+) = adenosine 5'-phosphosulfate + phosphate. It catalyses the reaction adenosine 5'-phosphosulfate + H2O = sulfate + AMP + 2 H(+). With respect to regulation, the adenosine 5'-phosphosulfate phosphorylase activity is enhanced at low pH. In terms of biological role, possesses adenylylsulfatase activity in vitro, releasing AMP and sulfate from adenylyl sulfate. Also possesses adenosine 5'-phosphosulfate (APS) phosphorylase activity in vitro. Catalyzes the phosphorolysis of APS, leading to ADP and sulfate. The chain is Bifunctional adenosine 5'-phosphosulfate phosphorylase/adenylylsulfatase HINT4 from Arabidopsis thaliana (Mouse-ear cress).